The sequence spans 367 residues: MRPDTADFRTLFLSGVAMLDVRAPLEFARGAFPGAVNLPLMDDAERHEVGLCYAQKGQQAAIELGHQLVSGLRKAARIAAWAEFARAHPDGYLYCFRGGLRSQLVQQWLHAAGVDYPRVTGGYKAMRGFLIETTDAAAAEQQWFVLGGLTGSGKTDVLADVPAAIDLEGHARHRGSAFGRRALAQPPQIDFENALAIDVLRHIDAGWRALLVEDEGRFIGSRDVPQVLTQRMQASPLVWLEASFDERVERVLRDYVQGLAAEFIAEKGSTEGFEAYATRLREAMAGISPRLGGARYGKLSALLDQALAQQAERGEVDLHRGWIEVLLREYYDPMYAFQREQREARIVFRGDRAAVTDWLRAHTAQRG.

Residues Phe-12 to Asp-135 enclose the Rhodanese domain. The active-site S-selanylcysteine intermediate is the Cys-95.

It belongs to the SelU family. As to quaternary structure, monomer.

It catalyses the reaction 5-methylaminomethyl-2-thiouridine(34) in tRNA + selenophosphate + (2E)-geranyl diphosphate + H2O + H(+) = 5-methylaminomethyl-2-selenouridine(34) in tRNA + (2E)-thiogeraniol + phosphate + diphosphate. It carries out the reaction 5-methylaminomethyl-2-thiouridine(34) in tRNA + (2E)-geranyl diphosphate = 5-methylaminomethyl-S-(2E)-geranyl-thiouridine(34) in tRNA + diphosphate. The catalysed reaction is 5-methylaminomethyl-S-(2E)-geranyl-thiouridine(34) in tRNA + selenophosphate + H(+) = 5-methylaminomethyl-2-(Se-phospho)selenouridine(34) in tRNA + (2E)-thiogeraniol. The enzyme catalyses 5-methylaminomethyl-2-(Se-phospho)selenouridine(34) in tRNA + H2O = 5-methylaminomethyl-2-selenouridine(34) in tRNA + phosphate. Functionally, involved in the post-transcriptional modification of the uridine at the wobble position (U34) of tRNA(Lys), tRNA(Glu) and tRNA(Gln). Catalyzes the conversion of 2-thiouridine (S2U-RNA) to 2-selenouridine (Se2U-RNA). Acts in a two-step process involving geranylation of 2-thiouridine (S2U) to S-geranyl-2-thiouridine (geS2U) and subsequent selenation of the latter derivative to 2-selenouridine (Se2U) in the tRNA chain. This chain is tRNA 2-selenouridine synthase, found in Cupriavidus necator (strain ATCC 17699 / DSM 428 / KCTC 22496 / NCIMB 10442 / H16 / Stanier 337) (Ralstonia eutropha).